The following is a 117-amino-acid chain: Large ribosomal subunit protein bL20c (117 aa).

Belongs to the bacterial ribosomal protein bL20 family.

The protein resides in the plastid. It localises to the chloroplast. Its function is as follows. Binds directly to 23S ribosomal RNA and is necessary for the in vitro assembly process of the 50S ribosomal subunit. It is not involved in the protein synthesizing functions of that subunit. This is Large ribosomal subunit protein bL20c from Phalaenopsis aphrodite subsp. formosana (Moth orchid).